A 57-amino-acid polypeptide reads, in one-letter code: Preprotein translocase subunit SecG (57 aa).

Residues 1-31 (MAKKKGEGPGLMSSAGLMRYFESEETSIKLD) lie on the Cytoplasmic side of the membrane. The helical transmembrane segment at 32 to 53 (PKMVIGAGIASGVAIMALNITF) threads the bilayer. Topologically, residues 54–57 (GLWP) are extracellular.

Belongs to the SEC61-beta family. Component of the protein translocase complex. Heterotrimer consisting of alpha (SecY), beta (SecG) and gamma (SecE) subunits. Can form oligomers of the heterotrimer.

It is found in the cell membrane. Involved in protein export. The function of the beta subunit is unknown, but it may be involved in stabilization of the trimeric complex. The polypeptide is Preprotein translocase subunit SecG (Methanothrix thermoacetophila (strain DSM 6194 / JCM 14653 / NBRC 101360 / PT) (Methanosaeta thermophila)).